The primary structure comprises 469 residues: Coiled-coil domain-containing protein 6 (469 aa).

Residues 1–10 show a composition bias toward acidic residues; that stretch reads MADSASESDT. The interval 1–37 is disordered; sequence MADSASESDTDAAGGGPAAMQSSCSATSGGSGGGGGG. An N-acetylalanine modification is found at A2. S45 carries the post-translational modification Phosphoserine. Residues 47 to 320 adopt a coiled-coil conformation; that stretch reads FRLEELTNRL…LCRQLSESES (274 aa). 3 consecutive repeat copies span residues 99 to 127, 128 to 156, and 157 to 185. The tract at residues 99–228 is 5 X 29 AA tandem repeats; sequence EQEEEFISNT…AEKRILQEKL (130 aa). Residues 186 to 199 form a 4; approximate repeat; the sequence is EQLRREKIDLENTL. Residues 200–228 form repeat 5; sequence EQEQEALVNRLWKRMDKLEAEKRILQEKL. S233, S237, S242, S247, S277, and S316 each carry phosphoserine. Residues 335–362 are disordered; it reads AQGLRPRTVSSPIPYTPSPSSSRPISPG. T342 carries the phosphothreonine modification. Residues 344-361 are compositionally biased toward low complexity; that stretch reads SSPIPYTPSPSSSRPISP. S356 and S360 each carry phosphoserine. R380 is modified (omega-N-methylarginine). 2 positions are modified to phosphoserine: S388 and S406. Positions 394-469 are disordered; the sequence is QHMGASHGIT…QHPVHPSSQP (76 aa). Positions 419–444 are enriched in pro residues; sequence PTPPPSPNTQSPVQPPPPPPPPPMQP. The short motif at 435 to 444 is the SH3-binding element; it reads PPPPPPPMQP. The span at 460–469 shows a compositional bias: low complexity; it reads QHPVHPSSQP.

It localises to the cytoplasm. The protein resides in the cytoskeleton. This chain is Coiled-coil domain-containing protein 6 (Ccdc6), found in Mus musculus (Mouse).